Here is a 75-residue protein sequence, read N- to C-terminus: Neuropeptide-like protein 31 (75 aa).

An N-terminal signal peptide occupies residues 1 to 22; sequence MISTSSILVLVVLLACFMAANA. A tyrosine amide mark is found at Y29, Y39, Y49, Y56, and Y64. Residue W73 is modified to Tryptophan amide.

Belongs to the YARP (YGGW-amide related peptide) family. As to expression, expressed in hypoderm.

Its subcellular location is the secreted. In terms of biological role, antimicrobial peptides that have antifungal activity against D.coniospora. Has weak antibacterial activity against Gram-positive bacteria M.luteus and Gram-negative E.coli. The protein is Neuropeptide-like protein 31 (nlp-31) of Caenorhabditis elegans.